Reading from the N-terminus, the 361-residue chain is Probable dual-specificity RNA methyltransferase RlmN (361 aa).

Glutamate 91 serves as the catalytic Proton acceptor. Residues 97–329 form the Radical SAM core domain; that stretch reads QHYGLSVCVT…KKKGVNCVVR (233 aa). Cysteines 104 and 340 form a disulfide. Residues cysteine 111, cysteine 115, and cysteine 118 each coordinate [4Fe-4S] cluster. Residues 163–164, serine 195, 218–220, and asparagine 296 contribute to the S-adenosyl-L-methionine site; these read GE and SLH. The active-site S-methylcysteine intermediate is cysteine 340.

The protein belongs to the radical SAM superfamily. RlmN family. It depends on [4Fe-4S] cluster as a cofactor.

The protein resides in the cytoplasm. It carries out the reaction adenosine(2503) in 23S rRNA + 2 reduced [2Fe-2S]-[ferredoxin] + 2 S-adenosyl-L-methionine = 2-methyladenosine(2503) in 23S rRNA + 5'-deoxyadenosine + L-methionine + 2 oxidized [2Fe-2S]-[ferredoxin] + S-adenosyl-L-homocysteine. The enzyme catalyses adenosine(37) in tRNA + 2 reduced [2Fe-2S]-[ferredoxin] + 2 S-adenosyl-L-methionine = 2-methyladenosine(37) in tRNA + 5'-deoxyadenosine + L-methionine + 2 oxidized [2Fe-2S]-[ferredoxin] + S-adenosyl-L-homocysteine. In terms of biological role, specifically methylates position 2 of adenine 2503 in 23S rRNA and position 2 of adenine 37 in tRNAs. The protein is Probable dual-specificity RNA methyltransferase RlmN of Streptococcus pneumoniae serotype 19F (strain G54).